The sequence spans 711 residues: Retrovirus-related Pol polyprotein from type-1 retrotransposable element R2 (711 aa).

The 279-residue stretch at 45 to 323 folds into the Reverse transcriptase domain; sequence LHLLRGHVPT…QTFRYLGHFF (279 aa). The tract at residues 444-711 is nucleic acid-binding endonuclease; it reads LFSCPSFDHL…RAVWSRQAGA (268 aa).

It catalyses the reaction DNA(n) + a 2'-deoxyribonucleoside 5'-triphosphate = DNA(n+1) + diphosphate. In Popillia japonica (Japanese beetle), this protein is Retrovirus-related Pol polyprotein from type-1 retrotransposable element R2.